The sequence spans 728 residues: 1,4-alpha-glucan branching enzyme GlgB (728 aa).

Asp405 (nucleophile) is an active-site residue. The active-site Proton donor is Glu458.

This sequence belongs to the glycosyl hydrolase 13 family. GlgB subfamily. In terms of assembly, monomer.

The enzyme catalyses Transfers a segment of a (1-&gt;4)-alpha-D-glucan chain to a primary hydroxy group in a similar glucan chain.. It functions in the pathway glycan biosynthesis; glycogen biosynthesis. In terms of biological role, catalyzes the formation of the alpha-1,6-glucosidic linkages in glycogen by scission of a 1,4-alpha-linked oligosaccharide from growing alpha-1,4-glucan chains and the subsequent attachment of the oligosaccharide to the alpha-1,6 position. This is 1,4-alpha-glucan branching enzyme GlgB from Shigella flexneri.